The primary structure comprises 117 residues: Large ribosomal subunit protein bL20c (117 aa).

This sequence belongs to the bacterial ribosomal protein bL20 family.

The protein resides in the plastid. The protein localises to the chloroplast. Binds directly to 23S ribosomal RNA and is necessary for the in vitro assembly process of the 50S ribosomal subunit. It is not involved in the protein synthesizing functions of that subunit. In Vitis vinifera (Grape), this protein is Large ribosomal subunit protein bL20c.